Here is a 1025-residue protein sequence, read N- to C-terminus: Probable beta-galactosidase B (1025 aa).

A signal peptide spans 1–21 (MATAFWLLLFLLGSLHVLTAA). N-linked (GlcNAc...) asparagine glycosylation is present at Asn-23. Tyr-90 contacts substrate. N-linked (GlcNAc...) asparagine glycosylation occurs at Asn-100. The substrate site is built by Asn-135, Ala-136, Glu-137, and Asn-195. Glu-196 serves as the catalytic Proton donor. The N-linked (GlcNAc...) asparagine glycan is linked to Asn-211. A substrate-binding site is contributed by Tyr-265. Cys-271 and Cys-324 are disulfide-bonded. Glu-308 functions as the Nucleophile in the catalytic mechanism. Residue Tyr-373 participates in substrate binding. Asn-411, Asn-456, Asn-736, Asn-776, Asn-884, Asn-925, and Asn-926 each carry an N-linked (GlcNAc...) asparagine glycan.

This sequence belongs to the glycosyl hydrolase 35 family.

The protein resides in the secreted. The catalysed reaction is Hydrolysis of terminal non-reducing beta-D-galactose residues in beta-D-galactosides.. Cleaves beta-linked terminal galactosyl residues from gangliosides, glycoproteins, and glycosaminoglycans. This is Probable beta-galactosidase B (lacB) from Emericella nidulans (strain FGSC A4 / ATCC 38163 / CBS 112.46 / NRRL 194 / M139) (Aspergillus nidulans).